The primary structure comprises 175 residues: Tumor necrosis factor receptor superfamily member 13C (175 aa).

Residues 1–71 are Extracellular-facing; it reads MGARRLRVRS…EGSALRPDVA (71 aa). One copy of the TNFR-Cys; truncated repeat lies at 21-38; that stretch reads QCNQTECFDPLVRNCVSC. Disulfide bonds link Cys22-Cys35 and Cys27-Cys38. N-linked (GlcNAc...) asparagine glycosylation is present at Asn23. The tract at residues 29–34 is essential for TNFSF13B/TALL1/BAFF/BLyS binding; it reads DPLVRN. A helical; Signal-anchor for type III membrane protein membrane pass occupies residues 72–92; the sequence is LLVGAPALLGLILALTLVGLV. At 93-175 the chain is on the cytoplasmic side; that stretch reads SLVSWRWRQQ…VTTKTAGPEQ (83 aa). The interval 124-175 is disordered; that stretch reads VPSSETPHASAPTWPPLKEDADSALPRHSVPVPATELGSTELVTTKTAGPEQ. Polar residues predominate over residues 160-175; sequence LGSTELVTTKTAGPEQ.

In terms of tissue distribution, highly expressed in spleen and testis; detected at lower levels in lung and thymus.

It localises to the membrane. Functionally, B-cell receptor specific for TNFSF13B/TALL1/BAFF/BLyS. Promotes the survival of mature B-cells and the B-cell response. The polypeptide is Tumor necrosis factor receptor superfamily member 13C (Tnfrsf13c) (Mus musculus (Mouse)).